The chain runs to 99 residues: METLTFEFPAGAPARGRALAGCVGSGDLEVLLEPAAGGALSIQVVTSVNGSGPRWQQLFARVFAASTAPAASIRIHDFGATPGVVRLRLEQALEEAGHD.

Serine 25 bears the O-(phosphoribosyl dephospho-coenzyme A)serine mark.

Belongs to the MdcC family. Post-translationally, covalently binds the prosthetic group of malonate decarboxylase.

The protein resides in the cytoplasm. In terms of biological role, subunit of malonate decarboxylase, it is an acyl carrier protein to which acetyl and malonyl thioester residues are bound via a 2'-(5''-phosphoribosyl)-3'-dephospho-CoA prosthetic group and turn over during the catalytic mechanism. This chain is Malonate decarboxylase acyl carrier protein, found in Pseudomonas aeruginosa (strain UCBPP-PA14).